The primary structure comprises 335 residues: NAC domain-containing protein 40 (335 aa).

An NAC domain is found at 14–156; that stretch reads LFPGFRFSPT…ALVVCRLRKN (143 aa). A DNA-binding region spans residues 112–162; sequence VGTKRTLVFHIGRAPRGERTEWIMHEYCIHGAPQDALVVCRLRKNADFRAS. The segment covering 245–254 has biased composition (polar residues); that stretch reads PTNPTHQETI. The disordered stretch occupies residues 245 to 267; that stretch reads PTNPTHQETISSESSSKRSKCGI. A helical membrane pass occupies residues 313–333; sequence VLATTVFLAILFSFFWTVLIA.

Post-translationally, proteolytically cleaved, probably by metalloprotease activity. This cleavage mediates a translocation from the plasma membrane to the nucleus. Expressed in seeds, leaves, roots and inflorescence. Expressed in roots, rosette leaves, cauline leaves, shoot apex, stems and flowers.

The protein resides in the cell membrane. The protein localises to the nucleus. In terms of biological role, transcriptional activator activated by proteolytic cleavage through regulated intramembrane proteolysis (RIP), probably via metalloprotease activity. Regulates gibberellic acid-mediated salt-responsive repression of seed germination and flowering via FT, thus delaying seed germination under high salinity conditions. In Arabidopsis thaliana (Mouse-ear cress), this protein is NAC domain-containing protein 40.